The following is a 187-amino-acid chain: Large ribosomal subunit protein eL18B (187 aa).

Residue T134 is modified to Phosphothreonine. S136 carries the post-translational modification Phosphoserine.

It belongs to the eukaryotic ribosomal protein eL18 family. As to quaternary structure, component of the large ribosomal subunit (LSU). Mature yeast ribosomes consist of a small (40S) and a large (60S) subunit. The 40S small subunit contains 1 molecule of ribosomal RNA (18S rRNA) and at least 33 different proteins. The large 60S subunit contains 3 rRNA molecules (25S, 5.8S and 5S rRNA) and at least 46 different proteins. eL18 interacts with NAP1.

It is found in the cytoplasm. Component of the ribosome, a large ribonucleoprotein complex responsible for the synthesis of proteins in the cell. The small ribosomal subunit (SSU) binds messenger RNAs (mRNAs) and translates the encoded message by selecting cognate aminoacyl-transfer RNA (tRNA) molecules. The large subunit (LSU) contains the ribosomal catalytic site termed the peptidyl transferase center (PTC), which catalyzes the formation of peptide bonds, thereby polymerizing the amino acids delivered by tRNAs into a polypeptide chain. The nascent polypeptides leave the ribosome through a tunnel in the LSU and interact with protein factors that function in enzymatic processing, targeting, and the membrane insertion of nascent chains at the exit of the ribosomal tunnel. This Schizosaccharomyces pombe (strain 972 / ATCC 24843) (Fission yeast) protein is Large ribosomal subunit protein eL18B (rpl1802).